A 313-amino-acid polypeptide reads, in one-letter code: Postacrosomal sheath WW domain-binding protein (313 aa).

The region spanning 8–87 (TESRRGALIP…GLMSDCTIEQ (80 aa)) is the GRAM domain. 12 repeat units span residues 179 to 185 (YGPPPPG), 193 to 199 (YGTPPEG), 207 to 213 (YGAPPMG), 214 to 220 (YGAPPVG), 221 to 227 (YGVPPGG), 228 to 234 (YGVPPGG), 235 to 241 (YGVPPGG), 242 to 248 (YGAPPGG), 249 to 255 (YGVPPGG), 256 to 262 (YGAPPGG), 263 to 269 (YGAPPAG), and 270 to 276 (YGAPPAG). Residues 179-276 (YGPPPPGYTV…PAGYGAPPAG (98 aa)) form a 12 X 7 AA tandem repeat of Y-G-X-P-P-X-G region. The short motif at 183–186 (PPGY) is the PPxY motif 1 element. A compositionally biased stretch (gly residues) spans 254-264 (GGYGAPPGGYG). Residues 254 to 313 (GGYGAPPGGYGAPPAGYGAPPAGNEALPPAYEAPSAGNTAASHRSMTAQQETSLPTTSSS) are disordered. The span at 265 to 276 (APPAGYGAPPAG) shows a compositional bias: low complexity. A PPxY motif 2 motif is present at residues 281–284 (PPAY). Residues 289–313 (AGNTAASHRSMTAQQETSLPTTSSS) are compositionally biased toward polar residues.

Expressed in testis.

May play a role in meiotic resumption and pronuclear formation, mediated by a WW domain-signaling pathway during fertilization. The sequence is that of Postacrosomal sheath WW domain-binding protein (WBP2NL) from Bos taurus (Bovine).